Here is a 77-residue protein sequence, read N- to C-terminus: Adipokinetic prohormone type 3 (77 aa).

Positions 1-22 (MQVRAVLVLAVVALVAVATSRA) are cleaved as a signal peptide. Residue glutamine 23 is modified to Pyrrolidone carboxylic acid. Position 30 is a tryptophan amide (tryptophan 30).

It belongs to the AKH/HRTH/RPCH family.

Its subcellular location is the secreted. This hormone, released from cells in the corpora cardiaca, causes release of diglycerides from the fat body and stimulation of muscles to use these diglycerides as an energy source during energy-demanding processes. This chain is Adipokinetic prohormone type 3, found in Locusta migratoria (Migratory locust).